The primary structure comprises 124 residues: 14 kDa phosphohistidine phosphatase (124 aa).

Lys-20 contributes to the substrate binding site. His-52 acts as the Proton acceptor in catalysis. 93-95 (SMG) contacts substrate.

It belongs to the janus family. In terms of assembly, monomer.

The protein localises to the cytoplasm. The catalysed reaction is N(pros)-phospho-L-histidyl-[protein] + H2O = L-histidyl-[protein] + phosphate. It catalyses the reaction N(tele)-phospho-L-histidyl-[protein] + H2O = L-histidyl-[protein] + phosphate. Functionally, exhibits phosphohistidine phosphatase activity. This chain is 14 kDa phosphohistidine phosphatase (Phpt1), found in Mus musculus (Mouse).